Reading from the N-terminus, the 316-residue chain is tRNA uridine(34) hydroxylase (316 aa).

The 95-residue stretch at 136-230 folds into the Rhodanese domain; that stretch reads ADENTVVVDK…YLEEVPREQS (95 aa). Cys-190 (cysteine persulfide intermediate) is an active-site residue.

It belongs to the TrhO family.

It catalyses the reaction uridine(34) in tRNA + AH2 + O2 = 5-hydroxyuridine(34) in tRNA + A + H2O. In terms of biological role, catalyzes oxygen-dependent 5-hydroxyuridine (ho5U) modification at position 34 in tRNAs. The sequence is that of tRNA uridine(34) hydroxylase from Brucella abortus (strain 2308).